Here is a 308-residue protein sequence, read N- to C-terminus: Protein translocase subunit SecF (308 aa).

The next 6 membrane-spanning stretches (helical) occupy residues 22-42 (AVSY…IGIY), 140-160 (IEAG…YIWV), 164-184 (WYFG…ALGF), 194-214 (LSTI…SVVI), 246-266 (ILTV…GGEA), and 272-292 (VLVF…SAPI).

This sequence belongs to the SecD/SecF family. SecF subfamily. In terms of assembly, forms a complex with SecD. Part of the essential Sec protein translocation apparatus which comprises SecA, SecYEG and auxiliary proteins SecDF-YajC and YidC.

It is found in the cell inner membrane. Its function is as follows. Part of the Sec protein translocase complex. Interacts with the SecYEG preprotein conducting channel. SecDF uses the proton motive force (PMF) to complete protein translocation after the ATP-dependent function of SecA. The polypeptide is Protein translocase subunit SecF (Rickettsia akari (strain Hartford)).